The following is a 169-amino-acid chain: Peptide deformylase (169 aa).

Positions 94 and 136 each coordinate Fe cation. Glutamate 137 is an active-site residue. Fe cation is bound at residue histidine 140.

It belongs to the polypeptide deformylase family. Fe(2+) serves as cofactor.

It catalyses the reaction N-terminal N-formyl-L-methionyl-[peptide] + H2O = N-terminal L-methionyl-[peptide] + formate. Functionally, removes the formyl group from the N-terminal Met of newly synthesized proteins. Requires at least a dipeptide for an efficient rate of reaction. N-terminal L-methionine is a prerequisite for activity but the enzyme has broad specificity at other positions. This chain is Peptide deformylase, found in Desulfotalea psychrophila (strain LSv54 / DSM 12343).